Reading from the N-terminus, the 75-residue chain is uncharacterized protein (75 aa).

Residues 4–26 (PSLLFLGFSGVLAFGEVGWVGVY) form a helical membrane-spanning segment.

It is found in the membrane. This is an uncharacterized protein from Treponema pallidum (strain Nichols).